We begin with the raw amino-acid sequence, 363 residues long: Lipase (363 aa).

Positions 1-24 are cleaved as a signal peptide; that stretch reads MVLKQRANYLGFLIVFFTAFLVEA. Positions 25 to 94 are excised as a propeptide; the sequence is VPIKRQSNST…SYPDSVVQAM (70 aa). The segment at 33-69 is disordered; it reads STVDSLPPLIPSRTSAPSSSPSTTDPEAPAMSRNGPL. Low complexity predominate over residues 43-62; sequence PSRTSAPSSSPSTTDPEAPA. 3 cysteine pairs are disulfide-bonded: cysteine 123–cysteine 362, cysteine 134–cysteine 137, and cysteine 329–cysteine 338. The active-site Nucleophile is serine 238. The active-site Charge relay system is the aspartate 297. Aspartate 350 provides a ligand contact to Ca(2+). Histidine 351 serves as the catalytic Charge relay system.

This sequence belongs to the AB hydrolase superfamily. Lipase family.

The catalysed reaction is a triacylglycerol + H2O = a diacylglycerol + a fatty acid + H(+). The polypeptide is Lipase (Rhizomucor miehei).